Reading from the N-terminus, the 282-residue chain is 4-diphosphocytidyl-2-C-methyl-D-erythritol kinase (282 aa).

Lys9 is a catalytic residue. 98-108 (PMGGGLGGGSS) contacts ATP. Asp140 is an active-site residue.

Belongs to the GHMP kinase family. IspE subfamily. In terms of assembly, homodimer.

It catalyses the reaction 4-CDP-2-C-methyl-D-erythritol + ATP = 4-CDP-2-C-methyl-D-erythritol 2-phosphate + ADP + H(+). The protein operates within isoprenoid biosynthesis; isopentenyl diphosphate biosynthesis via DXP pathway; isopentenyl diphosphate from 1-deoxy-D-xylulose 5-phosphate: step 3/6. Its function is as follows. Catalyzes the phosphorylation of the position 2 hydroxy group of 4-diphosphocytidyl-2C-methyl-D-erythritol. The sequence is that of 4-diphosphocytidyl-2-C-methyl-D-erythritol kinase from Salmonella paratyphi A (strain ATCC 9150 / SARB42).